We begin with the raw amino-acid sequence, 317 residues long: Probable transcription factor At5g61620 (317 aa).

The segment at 12–25 adopts a CCHC-type zinc-finger fold; sequence CSHCGHNGHNARTC. Positions 77–111 are disordered; that stretch reads DPIAAVDDTGYHSDGQIHSKKGKTAHEKKKGKPWT. Positions 94-108 are enriched in basic residues; the sequence is HSKKGKTAHEKKKGK. The HTH myb-type domain maps to 102-158; sequence HEKKKGKPWTEEEHRNFLIGLNKLGKGDWRGIAKSFVSTRTPTQVASHAQKYFIRLN. Positions 130–154 form a DNA-binding region, H-T-H motif; that stretch reads WRGIAKSFVSTRTPTQVASHAQKYF. A disordered region spans residues 173-206; that stretch reads SLEDQKEKERNSQDASTKTPPKQPITGIQQPVVQ. The segment covering 175 to 184 has biased composition (basic and acidic residues); sequence EDQKEKERNS. Residues 185–206 are compositionally biased toward polar residues; sequence QDASTKTPPKQPITGIQQPVVQ.

Its subcellular location is the nucleus. Its function is as follows. Probable transcription factor involved in somatic embryogenesis. Acts as a positive regulator of BHLH109. The chain is Probable transcription factor At5g61620 from Arabidopsis thaliana (Mouse-ear cress).